The primary structure comprises 63 residues: MESRLLDILVCPLCKGRLEFLRAQDELVCHADRLAFPVRDGIPVMLESAARPLDAPADTAHAS.

It belongs to the UPF0434 family.

This chain is UPF0434 protein BAV2101, found in Bordetella avium (strain 197N).